The chain runs to 251 residues: tRNA (guanine-N(7)-)-methyltransferase (251 aa).

S-adenosyl-L-methionine contacts are provided by E80, E105, D132, and D155. D155 is a catalytic residue. Residues K159, D191, and 228–231 (TKFE) each bind substrate.

It belongs to the class I-like SAM-binding methyltransferase superfamily. TrmB family.

The enzyme catalyses guanosine(46) in tRNA + S-adenosyl-L-methionine = N(7)-methylguanosine(46) in tRNA + S-adenosyl-L-homocysteine. Its pathway is tRNA modification; N(7)-methylguanine-tRNA biosynthesis. In terms of biological role, catalyzes the formation of N(7)-methylguanine at position 46 (m7G46) in tRNA. The polypeptide is tRNA (guanine-N(7)-)-methyltransferase (Histophilus somni (strain 2336) (Haemophilus somnus)).